Reading from the N-terminus, the 338-residue chain is Ketol-acid reductoisomerase (NADP(+)) (338 aa).

Residues 1–181 (MKVYYDKDAD…GGGKAGIIET (181 aa)) form the KARI N-terminal Rossmann domain. Residues 24-27 (YGSQ), arginine 47, and serine 52 contribute to the NADP(+) site. Histidine 107 is an active-site residue. Glycine 133 contacts NADP(+). Residues 182 to 327 (NFREETETDL…EKLRAMMPWI (146 aa)) form the KARI C-terminal knotted domain. The Mg(2+) site is built by aspartate 190, glutamate 194, glutamate 226, and glutamate 230. Serine 251 is a substrate binding site.

It belongs to the ketol-acid reductoisomerase family. The cofactor is Mg(2+).

The enzyme catalyses (2R)-2,3-dihydroxy-3-methylbutanoate + NADP(+) = (2S)-2-acetolactate + NADPH + H(+). It catalyses the reaction (2R,3R)-2,3-dihydroxy-3-methylpentanoate + NADP(+) = (S)-2-ethyl-2-hydroxy-3-oxobutanoate + NADPH + H(+). Its pathway is amino-acid biosynthesis; L-isoleucine biosynthesis; L-isoleucine from 2-oxobutanoate: step 2/4. It participates in amino-acid biosynthesis; L-valine biosynthesis; L-valine from pyruvate: step 2/4. Functionally, involved in the biosynthesis of branched-chain amino acids (BCAA). Catalyzes an alkyl-migration followed by a ketol-acid reduction of (S)-2-acetolactate (S2AL) to yield (R)-2,3-dihydroxy-isovalerate. In the isomerase reaction, S2AL is rearranged via a Mg-dependent methyl migration to produce 3-hydroxy-3-methyl-2-ketobutyrate (HMKB). In the reductase reaction, this 2-ketoacid undergoes a metal-dependent reduction by NADPH to yield (R)-2,3-dihydroxy-isovalerate. In Variovorax paradoxus (strain S110), this protein is Ketol-acid reductoisomerase (NADP(+)).